Consider the following 256-residue polypeptide: Imidazole glycerol phosphate synthase subunit HisF (256 aa).

Active-site residues include Asp11 and Asp130.

The protein belongs to the HisA/HisF family. In terms of assembly, heterodimer of HisH and HisF.

The protein resides in the cytoplasm. It carries out the reaction 5-[(5-phospho-1-deoxy-D-ribulos-1-ylimino)methylamino]-1-(5-phospho-beta-D-ribosyl)imidazole-4-carboxamide + L-glutamine = D-erythro-1-(imidazol-4-yl)glycerol 3-phosphate + 5-amino-1-(5-phospho-beta-D-ribosyl)imidazole-4-carboxamide + L-glutamate + H(+). It functions in the pathway amino-acid biosynthesis; L-histidine biosynthesis; L-histidine from 5-phospho-alpha-D-ribose 1-diphosphate: step 5/9. IGPS catalyzes the conversion of PRFAR and glutamine to IGP, AICAR and glutamate. The HisF subunit catalyzes the cyclization activity that produces IGP and AICAR from PRFAR using the ammonia provided by the HisH subunit. In Thioalkalivibrio sulfidiphilus (strain HL-EbGR7), this protein is Imidazole glycerol phosphate synthase subunit HisF.